The primary structure comprises 404 residues: AT-hook motif nuclear-localized protein 3 (404 aa).

Disordered stretches follow at residues 1 to 51, 70 to 100, and 113 to 133; these read MEER…VPPT, PFSL…PDGT, and SVPL…GKSN. The segment covering 7–19 has biased composition (polar residues); that stretch reads TNINNNITSSFGL. A compositionally biased stretch (pro residues) spans 35–51; that stretch reads DPPPRPENPNPFLVPPT. Over residues 71–83 the composition is skewed to polar residues; the sequence is FSLTMPTENTSAE. The Bipartite nuclear localization signal signature appears at 86 to 94; it reads KKKRGRPRK. Positions 86–98 form a DNA-binding region, a.T hook; it reads KKKRGRPRKYNPD. Positions 123 to 133 are enriched in basic residues; that stretch reads RKRGRGRGKSN. Positions 163–308 constitute a PPC domain; sequence GANFTPHVLI…RFGAQPSSIS (146 aa). Residues 359-404 are disordered; sequence PFSSIPVGGGGGGEVGEEEGEEDDDELEGEDEEFGGDSQSDNEIPS. Positions 373 to 393 are enriched in acidic residues; sequence VGEEEGEEDDDELEGEDEEFG.

Homodimer. Interacts with AHL4. In terms of tissue distribution, expressed in both procambium and xylem precursors of the root meristem. Also detected in the endodermis in the late elongation zone and onwards.

The protein localises to the nucleus. Its function is as follows. Transcription factor that specifically binds AT-rich DNA sequences related to the nuclear matrix attachment regions (MARs). Acts redundantly with AHL4 to regulate the formation of tissue boundary between the xylem and procambium in the root meristem. In Arabidopsis thaliana (Mouse-ear cress), this protein is AT-hook motif nuclear-localized protein 3.